Here is a 683-residue protein sequence, read N- to C-terminus: Synaptic vesicle glycoprotein 2B (683 aa).

A disordered region spans residues 1-42 (MDDYKYQDNYGGYAPSDGYYRGNESNPEEDAQSDVTEGHDEE). Over 1 to 108 (MDDYKYQDNY…MDECGHGRFQ (108 aa)) the chain is Cytoplasmic. S33 is modified (phosphoserine). Phosphothreonine is present on T36. The chain crosses the membrane as a helical span at residues 109–129 (WILFFVLGLALMADGVEVFVV). Residues 130–148 (SFALPSAEKDMCLSSSKKG) lie on the Extracellular side of the membrane. The helical transmembrane segment at 149–169 (MLGMIVYLGMMAGAFILGGLA) threads the bilayer. The Cytoplasmic segment spans residues 170 to 182 (DKLGRKRVLSMSL). A helical membrane pass occupies residues 183 to 203 (AVNASFASLSSFVQGYGAFLF). Over 204–205 (CR) the chain is Extracellular. The chain crosses the membrane as a helical span at residues 206-226 (LISGIGIGGALPIVFAYFSEF). Residues 227-237 (LSREKRGEHLS) lie on the Cytoplasmic side of the membrane. The helical transmembrane segment at 238–258 (WLGIFWMTGGLYASAMAWSII) threads the bilayer. Residues 259 to 277 (PHYGWGFSMGTNYHFHSWR) are Extracellular-facing. Residues 278–298 (VFVIVCALPCTVSMVALKFMP) form a helical membrane-spanning segment. Residues 299–390 (ESPRFLLEMG…CVMGPYRMNT (92 aa)) lie on the Cytoplasmic side of the membrane. The chain crosses the membrane as a helical span at residues 391 to 411 (LILAVVWFAMAFSYYGLTVWF). Topologically, residues 412 to 535 (PDMIRYFQDE…CHMDLEQDND (124 aa)) are extracellular. Residue Y423 is modified to Phosphotyrosine. Residues N441, N491, and N516 are each glycosylated (N-linked (GlcNAc...) asparagine). The helical transmembrane segment at 536–556 (FLIYLVSFLGSLSVLPGNIIS) threads the bilayer. Over 557–565 (ALLMDRIGR) the chain is Cytoplasmic. The chain crosses the membrane as a helical span at residues 566–586 (LKMIGGSMLISAVCCFFLFFG). The Extracellular segment spans residues 587-592 (NSESAM). A helical membrane pass occupies residues 593–613 (IGWQCLFCGTSIAAWNALDVI). Residues 614 to 626 (TVELYPTNQRATA) are Cytoplasmic-facing. A helical transmembrane segment spans residues 627-649 (FGILNGLCKFGAILGNTIFASFV). The Extracellular segment spans residues 650–653 (GITK). The helical transmembrane segment at 654 to 672 (VVPILLAAASLVGGGLIAL) threads the bilayer. Residues 673 to 683 (RLPETREQVLM) lie on the Cytoplasmic side of the membrane.

It belongs to the major facilitator superfamily. As to quaternary structure, interacts with SYT1 in a calcium-independent manner. Forms a complex with SYT1, syntaxin-1 and SNAP25. (Microbial infection) Interacts with C.botulinum neurotoxin type A2 (BoNT/A, botA). Interaction is improved by glycosylation of SV2. N-glycosylated. Post-translationally, the N-terminal cytoplasmic domain is phosphorylated by CK1.

Its subcellular location is the cytoplasmic vesicle. It is found in the secretory vesicle. The protein localises to the synaptic vesicle membrane. The protein resides in the acrosome. Probably plays a role in the control of regulated secretion in neural and endocrine cells. Functionally, (Microbial infection) Receptor for the C.botulinum neurotoxin type A2 (BoNT/A, botA); glycosylation is not essential but enhances the interaction. Probably also serves as a receptor for the closely related C.botulinum neurotoxin type A1. The protein is Synaptic vesicle glycoprotein 2B (SV2B) of Homo sapiens (Human).